The following is a 1305-amino-acid chain: Rho GTPase-activating protein 33 (1305 aa).

Residues Met1 to Arg64 are disordered. At Ser32 the chain carries Phosphoserine. Residues Phe83–Leu192 enclose the PX; atypical domain. The region spanning Pro210–Glu272 is the SH3 domain. In terms of domain architecture, Rho-GAP spans Cys339–Phe534. Disordered regions lie at residues Arg575 to Ser818, Leu864 to Ser1054, and Ser1115 to Cys1305. Residues Thr582–Pro595 are compositionally biased toward low complexity. Ser594 is subject to Phosphoserine. The segment covering Val596–Arg608 has biased composition (basic and acidic residues). The span at Ser646 to Ser669 shows a compositional bias: polar residues. Residue Ser660 is modified to Phosphoserine. Low complexity predominate over residues Ala694–Ser733. Ser749 is modified (phosphoserine). Residues Pro774 to Pro786 show a composition bias toward pro residues. Positions Ala787 to Pro798 are enriched in low complexity. A compositionally biased stretch (polar residues) spans Leu864–Ser873. Residues Leu895–Asn915 show a composition bias toward pro residues. The span at Pro916–Gln940 shows a compositional bias: low complexity. 3 stretches are compositionally biased toward polar residues: residues Arg992–Ser1020, Ser1039–Ser1054, and Ser1115–Pro1125. At Tyr1188 the chain carries Phosphotyrosine. Residues Gly1194 to Pro1208 are compositionally biased toward low complexity. Arg1263 is modified (omega-N-methylarginine). Residues Ser1292 to Cys1305 are compositionally biased toward polar residues.

This sequence belongs to the PX domain-containing GAP family. In terms of assembly, specifically interacts with CDC42 and RHOQ/TC10 through its Rho-GAP domain. Interacts with NEK6. In terms of tissue distribution, highly expressed in brain and testis. Also expressed in white adipose tissue (WAT) and muscle at a low level.

The protein localises to the cell membrane. May be involved in several stages of intracellular trafficking. Could play an important role in the regulation of glucose transport by insulin. May act as a downstream effector of RHOQ/TC10 in the regulation of insulin-stimulated glucose transport. The protein is Rho GTPase-activating protein 33 (Arhgap33) of Mus musculus (Mouse).